A 213-amino-acid polypeptide reads, in one-letter code: Thiamine-phosphate synthase (213 aa).

Residues 39-43 and Asn71 contribute to the 4-amino-2-methyl-5-(diphosphooxymethyl)pyrimidine site; that span reads QLREK. Residues Asp72 and Asp91 each contribute to the Mg(2+) site. Ser110 serves as a coordination point for 4-amino-2-methyl-5-(diphosphooxymethyl)pyrimidine. 136–138 serves as a coordination point for 2-[(2R,5Z)-2-carboxy-4-methylthiazol-5(2H)-ylidene]ethyl phosphate; it reads TGT. Lys139 contacts 4-amino-2-methyl-5-(diphosphooxymethyl)pyrimidine. Residues Gly166 and 186–187 each bind 2-[(2R,5Z)-2-carboxy-4-methylthiazol-5(2H)-ylidene]ethyl phosphate; that span reads VS.

Belongs to the thiamine-phosphate synthase family. It depends on Mg(2+) as a cofactor.

It catalyses the reaction 2-[(2R,5Z)-2-carboxy-4-methylthiazol-5(2H)-ylidene]ethyl phosphate + 4-amino-2-methyl-5-(diphosphooxymethyl)pyrimidine + 2 H(+) = thiamine phosphate + CO2 + diphosphate. The enzyme catalyses 2-(2-carboxy-4-methylthiazol-5-yl)ethyl phosphate + 4-amino-2-methyl-5-(diphosphooxymethyl)pyrimidine + 2 H(+) = thiamine phosphate + CO2 + diphosphate. The catalysed reaction is 4-methyl-5-(2-phosphooxyethyl)-thiazole + 4-amino-2-methyl-5-(diphosphooxymethyl)pyrimidine + H(+) = thiamine phosphate + diphosphate. It participates in cofactor biosynthesis; thiamine diphosphate biosynthesis; thiamine phosphate from 4-amino-2-methyl-5-diphosphomethylpyrimidine and 4-methyl-5-(2-phosphoethyl)-thiazole: step 1/1. Functionally, condenses 4-methyl-5-(beta-hydroxyethyl)thiazole monophosphate (THZ-P) and 2-methyl-4-amino-5-hydroxymethyl pyrimidine pyrophosphate (HMP-PP) to form thiamine monophosphate (TMP). This is Thiamine-phosphate synthase from Clostridium botulinum (strain Eklund 17B / Type B).